The sequence spans 160 residues: Ribosome maturation factor RimP (160 aa).

This sequence belongs to the RimP family.

It localises to the cytoplasm. Functionally, required for maturation of 30S ribosomal subunits. The chain is Ribosome maturation factor RimP from Citrifermentans bemidjiense (strain ATCC BAA-1014 / DSM 16622 / JCM 12645 / Bem) (Geobacter bemidjiensis).